Consider the following 543-residue polypeptide: Cytochrome P450 307a1 (543 aa).

A Phosphoserine modification is found at serine 219. The disordered stretch occupies residues 440–460 (FLEPSKEQSPKNSKGSDSGIE). Polar residues predominate over residues 449–460 (PKNSKGSDSGIE). Cysteine 485 provides a ligand contact to heme.

The protein belongs to the cytochrome P450 family. Heme is required as a cofactor.

It is found in the endoplasmic reticulum membrane. It localises to the microsome membrane. Its function is as follows. Required for correct development of the embryonic midline glial cells which are necessary for the formation of distinct segmental commissures. The chain is Cytochrome P450 307a1 (spo) from Drosophila melanogaster (Fruit fly).